A 346-amino-acid chain; its full sequence is L-glyceraldehyde 3-phosphate reductase (346 aa).

Residues tryptophan 33, aspartate 61, tyrosine 66, serine 168, glutamine 193, threonine 223, leucine 225, glutamine 227, lysine 233, serine 303, glutamine 307, and asparagine 311 each contribute to the NADP(+) site.

It belongs to the shaker potassium channel beta subunit family.

The enzyme catalyses a primary alcohol + NADP(+) = an aldehyde + NADPH + H(+). Functionally, aldo-keto reductase that catalyzes the stereospecific, NADPH-dependent reduction of L-glyceraldehyde 3-phosphate (L-GAP) to L-glycerol 3-phosphate (L-G3P). The chain is L-glyceraldehyde 3-phosphate reductase from Escherichia coli O157:H7.